The following is a 340-amino-acid chain: Delta-aminolevulinic acid dehydratase (340 aa).

Zn(2+) contacts are provided by Cys134, Cys136, and Cys144. Lys211 serves as the catalytic Schiff-base intermediate with substrate. The 5-aminolevulinate site is built by Arg221 and Arg233. The Schiff-base intermediate with substrate role is filled by Lys264. The 5-aminolevulinate site is built by Ser291 and Tyr330.

It belongs to the ALAD family. Homooctamer. It depends on Zn(2+) as a cofactor.

It catalyses the reaction 2 5-aminolevulinate = porphobilinogen + 2 H2O + H(+). It participates in porphyrin-containing compound metabolism; protoporphyrin-IX biosynthesis; coproporphyrinogen-III from 5-aminolevulinate: step 1/4. Functionally, catalyzes an early step in the biosynthesis of tetrapyrroles. Binds two molecules of 5-aminolevulinate per subunit, each at a distinct site, and catalyzes their condensation to form porphobilinogen. This Eremothecium gossypii (strain ATCC 10895 / CBS 109.51 / FGSC 9923 / NRRL Y-1056) (Yeast) protein is Delta-aminolevulinic acid dehydratase (HEM2).